The following is a 319-amino-acid chain: Probable casein kinase II subunit alpha homolog (319 aa).

The Protein kinase domain occupies 37-316; the sequence is YQIYQRMGRG…ADECLRHPLF (280 aa). ATP is bound by residues 43–51 and lysine 64; that span reads MGRGKYSEV. Aspartate 151 functions as the Proton acceptor in the catalytic mechanism.

It belongs to the protein kinase superfamily. Ser/Thr protein kinase family. CK2 subfamily. Tetramer composed of two alpha chains, one beta chain and one beta' chain.

The catalysed reaction is L-seryl-[protein] + ATP = O-phospho-L-seryl-[protein] + ADP + H(+). It carries out the reaction L-threonyl-[protein] + ATP = O-phospho-L-threonyl-[protein] + ADP + H(+). Catalytic subunit of a constitutively active serine/threonine-protein kinase complex that phosphorylates a large number of substrates containing acidic residues C-terminal to the phosphorylated serine or threonine. This chain is Probable casein kinase II subunit alpha homolog (CKA1), found in Encephalitozoon cuniculi (strain GB-M1) (Microsporidian parasite).